The sequence spans 1333 residues: MDTNWLYVLLQKSTADPLERLKLGNVILNEISQRKVSPHPKLVNDFLDVMSGWLTGSNFKVTIIGLEILDAALRTSPEVLASYYFDRLSVLIERMGDAKVQVREMAINLCRQLAYLENSSPVMLLDRLCVHGTGFEHKQWLVKVGSLNILRDFLSDSFALVIPQAINLIPQLCRLTNDPNSEVRDASTNCLVDLMVFGGKSIIAKIANTRILNEQKMATLLQRYESTIATRGDLPPKHSIPIETSSIPRNNLLRRSLRSPAKIIHPSASTTSFTSSARLSTPPRTNAPSLSPSPSTPSPLSLPAANGRSRDLARSSLRAPAGMSLSRYRSSSCAPAAQCAITLDDFKKAFNAVPKISIYSNSDVREKLETANSVLRNANEDWSKRANQLKLIRSVILNSDDSIDQRLLLSLINELADALEFSIRDLRSQIVREAAITCSFLFEHFGMDVRNVAECVLPAALAQVAVSTKIMASSAATLTVFIVQKIQTRQIFQTLFDLSTSKSKEQRRQLANLLETLISSWDLKVKQPILKSISQLVQNAICDADGETRVAGRKAFAKLEQLHGAAADQIFRELDPAKQKMLRDGVSSSSSSLNSDRDNNNQKQPQQPQQNISQKFLSQRSASALDNKSQVLSIAKPQQSNPSRPTAMPVNNRLPKSSTSSSFSAVRSSGYGQSRAKTPSDGFGGTNFNNNNNNNNKSSSSSPSTSTHQTPIQRVASNLGSSSFVASLTQEQASSLQNAMDLAKDEMSKNNEDDEFLLAEVRKTPPKETSPPASLYARGYGNGSNGSNNSSNNSIQSVEHILKACTSSSINEKRDAIISLSQKLLDRNLDSLECKNIGDTLSRLLAEGNTTLIISILETISIFVKCHYKKLDGWLKLALGKLFAKMGADSLPNVKSALSSTQKMFLTTFDPSTQLKEVCDFMCDPVHLLAPKSRLALLEYICLLFEEIWPEDPRCLERQTQLDTPYTRAAVRKMFAWMFDPRIGAILMPACERLVCALFALNAADFTMIFGDLPPECRDWAYRILQLNGQQQSAQRQQIMEKEAITMTNNNYKPCPPEVEKFEKVSVKASFSTYEATRVPEPQDYRKPTVHLAKNHVEQAAYIRNQMDLMRDFQKPDRVNEAMANLHGMMCEGSFTLWNQFFDELLDEIYQILSTLSQSIRKKLAMRILQKMCTAQATKLFDSTEIAISKVLQCACTSEDNTMSVAAEDCLRILATHLPLPRIVQISRRILSQDDDDQRGVLILKMLTRMFQDIDVDELHMIVDDVAPCFVSAYDSTSSSVRKCAVFGLVALVQRVGMPRLETHLRKLNATKLNLIDLYVGRAKSSESGTSSN.

The HEAT 1 repeat unit spans residues 168-206; sequence LIPQLCRLTNDPNSEVRDASTNCLVDLMVFGGKSIIAKI. The span at 269-305 shows a compositional bias: low complexity; it reads STTSFTSSARLSTPPRTNAPSLSPSPSTPSPLSLPAA. The disordered stretch occupies residues 269–311; the sequence is STTSFTSSARLSTPPRTNAPSLSPSPSTPSPLSLPAANGRSRD. Positions 360–389 form a coiled coil; sequence SNSDVREKLETANSVLRNANEDWSKRANQL. 2 disordered regions span residues 579–711 and 764–792; these read QKML…HQTP and TPPKETSPPASLYARGYGNGSNGSNNSSN. Positions 601–611 are enriched in low complexity; the sequence is NQKQPQQPQQN. Positions 612–644 are enriched in polar residues; it reads ISQKFLSQRSASALDNKSQVLSIAKPQQSNPSR. Composition is skewed to low complexity over residues 657 to 669 and 686 to 707; these read SSTSSSFSAVRSS and TNFNNNNNNNNKSSSSSPSTST. The HEAT 2 repeat unit spans residues 1266–1304; it reads VAPCFVSAYDSTSSSVRKCAVFGLVALVQRVGMPRLETH.

Belongs to the CLASP family.

It is found in the cytoplasm. It localises to the cytoskeleton. In terms of biological role, microtubule plus-end tracking protein that promotes the stabilization of dynamic microtubules. This Caenorhabditis briggsae protein is Protein CLASP-1.